Reading from the N-terminus, the 273-residue chain is F-actin-capping protein subunit alpha (273 aa).

Belongs to the F-actin-capping protein alpha subunit family. In terms of assembly, component of the F-actin capping complex, composed of a heterodimer of an alpha and a beta subunit.

The protein localises to the cytoplasm. It is found in the cytoskeleton. The protein resides in the actin patch. F-actin-capping proteins bind in a Ca(2+)-independent manner to the fast growing ends of actin filaments (barbed end) thereby blocking the exchange of subunits at these ends. Unlike other capping proteins (such as gelsolin and severin), these proteins do not sever actin filaments. The chain is F-actin-capping protein subunit alpha (cap1) from Aspergillus oryzae (strain ATCC 42149 / RIB 40) (Yellow koji mold).